The primary structure comprises 149 residues: Transcriptional repressor NrdR (149 aa).

A zinc finger lies at 3-34 (CPFCAAEETKVVDSRLAADGYQIRRRRECTSC). Positions 49–139 (PYVIKNNGNR…VYLSFDDIEE (91 aa)) constitute an ATP-cone domain.

It belongs to the NrdR family. Zn(2+) is required as a cofactor.

Negatively regulates transcription of bacterial ribonucleotide reductase nrd genes and operons by binding to NrdR-boxes. This is Transcriptional repressor NrdR from Actinobacillus pleuropneumoniae serotype 3 (strain JL03).